A 184-amino-acid polypeptide reads, in one-letter code: Ras-related protein Rap-1A (184 aa).

GTP is bound by residues 10–18 (GSGGVGKSA), 29–35 (VEKYDPT), glycine 60, and 116–119 (NKCD). The Effector region signature appears at 32 to 40 (YDPTIEDSY). Cysteine 181 bears the Cysteine methyl ester mark. Residue cysteine 181 is the site of S-geranylgeranyl cysteine attachment. A propeptide spans 182–184 (LLL) (removed in mature form).

The protein belongs to the small GTPase superfamily. Ras family. In terms of assembly, found in a complex, at least composed of ITGB1BP1, KRIT1 and RAP1A. Interacts (active GTP-bound form preferentially) with KRIT1 (via C-terminus FERM domain); the interaction does not induce the opening conformation of KRIT1. Found in a complex composed of CDH1, RAP1A and PKP3; PKP3 acts as a scaffold protein within the complex, the complex is required for CDH1 localization to mature desmosome cell junctions. In its GTP-bound form interacts with PLCE1 and RADIL. Interacts with SGSM1, SGSM2 and SGSM3. Interacts (via GTP-bound active form) with RAPGEF2 (via Ras-associating domain). Interacts with TBC1D21. Interacts with RAP1GDS1.

The protein resides in the cell membrane. It is found in the cytoplasm. It localises to the perinuclear region. Its subcellular location is the cell junction. The protein localises to the early endosome. The enzyme catalyses GTP + H2O = GDP + phosphate + H(+). Its activity is regulated as follows. Activated by guanine nucleotide-exchange factors (GEF) EPAC and EPAC2 in a cAMP-dependent manner, and GFR. In terms of biological role, counteracts the mitogenic function of Ras, at least partly because it can interact with Ras GAPs and RAF in a competitive manner. Together with ITGB1BP1, regulates KRIT1 localization to microtubules and membranes. Plays a role in nerve growth factor (NGF)-induced neurite outgrowth. Plays a role in the regulation of embryonic blood vessel formation. Involved in the establishment of basal endothelial barrier function. Facilitates the progressive accumulation of CDH1 at mature desmosome junctions via cAMP-dependent signaling and its interaction with PKP3. May be involved in the regulation of the vascular endothelial growth factor receptor KDR expression at endothelial cell-cell junctions. This is Ras-related protein Rap-1A (RAP1A) from Bos taurus (Bovine).